Consider the following 551-residue polypeptide: MSVAIKMSTNTVGGQSTRQPPGSACLHCRNKKMKCDALQPRCKNCFNAGVECIRSNNYSRKRSAQRDHIEGPQDRVETSDAEVYDVQPKFNPGLFNLDFHMDSFYDMDYNFLENITPESFPILSPLDSLPSLIPSETVECSQPQTVIETAGILAPPLNDPINDLMHEDLDQLYLDRVHRLIPILHRRRYFSWTRSPNRTDAQTCLQFAMWTLATSLSTQLQHLRESFYQRTCSLLDKFTAQDTAAPQIEYAQACILIVNYDLMKENFRRGWTSAGRCIRVIQLMRLFEIDRSKGRNDREDWIQREEKRRAFWMAYSLDLFISLRGEWPLSLTGTDFVRLPALDKDFDNSHYVEMPFLGTVLSGASSSVLSPWAESIVFATIIRRITALTSELEGLSPGSSSTNVWSKIDLLRNILKSRLASLSFKHQDSHFPFSDDPMETFMIMIAQSSVLYLYNTQKSFSRATESSQNISMALQYEAQMAAQEIANLSTSILHMSRFKIHPFTPLILAKCMEFYKSNQNLDEITQAAVKQIYELLRHISKVNNIAVEYLS.

Residues 1-21 (MSVAIKMSTNTVGGQSTRQPP) form a disordered region. Residues 7-20 (MSTNTVGGQSTRQP) are compositionally biased toward polar residues. Residues 25-52 (CLHCRNKKMKCDALQPRCKNCFNAGVEC) constitute a DNA-binding region (zn(2)-C6 fungal-type).

Its subcellular location is the nucleus. Functionally, transcription factor that regulates the expression of the gene cluster that mediates the biosynthesis tropolone class of fungal maleic anhydrides, including stipitaldehydic, stipitatonic and stipitatic acids. The sequence is that of Tropolone cluster transcription factor tropK from Talaromyces stipitatus (strain ATCC 10500 / CBS 375.48 / QM 6759 / NRRL 1006) (Penicillium stipitatum).